The primary structure comprises 153 residues: Mitotic-spindle organizing protein 2 (153 aa).

The interval 80–153 (KVSETSTGDA…SSSSSQLTSN (74 aa)) is disordered. Polar residues-rich tracts occupy residues 81-99 (VSET…TAVP) and 107-133 (KMSS…SATR). Low complexity predominate over residues 134–153 (GQKSTKSSGSSSSSSQLTSN).

It belongs to the MOZART2 family. As to quaternary structure, part of the gamma-tubulin complex. Interacts with TUBG1.

The protein localises to the cytoplasm. It localises to the cytoskeleton. The protein resides in the microtubule organizing center. Its subcellular location is the centrosome. It is found in the spindle. The polypeptide is Mitotic-spindle organizing protein 2 (mzt2) (Danio rerio (Zebrafish)).